A 50-amino-acid chain; its full sequence is Gene 38 protein (50 aa).

This is Gene 38 protein (38) from Mycobacterium (Mycobacteriophage D29).